A 204-amino-acid chain; its full sequence is Large ribosomal subunit protein uL10 (204 aa).

Residues 170 to 204 (AADPSVIGGAGEASDQEPKTTETPEASAAQDNTNE) form a disordered region. The span at 192–204 (TPEASAAQDNTNE) shows a compositional bias: polar residues.

This sequence belongs to the universal ribosomal protein uL10 family. Part of the ribosomal stalk of the 50S ribosomal subunit. The N-terminus interacts with L11 and the large rRNA to form the base of the stalk. The C-terminus forms an elongated spine to which L12 dimers bind in a sequential fashion forming a multimeric L10(L12)X complex.

Forms part of the ribosomal stalk, playing a central role in the interaction of the ribosome with GTP-bound translation factors. The sequence is that of Large ribosomal subunit protein uL10 from Cutibacterium acnes (strain DSM 16379 / KPA171202) (Propionibacterium acnes).